The chain runs to 65 residues: Large ribosomal subunit protein uL29 (65 aa).

Belongs to the universal ribosomal protein uL29 family.

In Xylella fastidiosa (strain 9a5c), this protein is Large ribosomal subunit protein uL29 (rpmC).